The sequence spans 1132 residues: NUT family member 1 (1132 aa).

Disordered stretches follow at residues 1-56 (MASD…SVFS), 337-365 (AASKTRAPRRRQRKAQRPPAPEAPKEIPP), 383-405 (LATGESDGKQEEEGQQQEEEGMY), 476-584 (EEED…VERR), 693-714 (RGTPMAQSYDQNPSPRAAGERD), 873-892 (DASSLPEASQEAGSRGNSFS), and 922-1017 (PLNV…DEEL). Over residues 21 to 36 (APSPSPALPFLPPTSD) the composition is skewed to pro residues. Over residues 337 to 352 (AASKTRAPRRRQRKAQ) the composition is skewed to basic residues. Over residues 395–404 (EGQQQEEEGM) the composition is skewed to acidic residues. Polar residues-rich tracts occupy residues 487–497 (SGAQLDSSPSG), 697–706 (MAQSYDQNPS), and 883–892 (EAGSRGNSFS). Residues 932–942 (GEGRVDPDLSK) show a composition bias toward basic and acidic residues. Residues 950–971 (QESQESYTTGTPKATSSHQGLG) show a composition bias toward polar residues. Ser1026, Ser1029, and Ser1031 each carry phosphoserine. Residues 1031–1132 (SPREHPLSPH…GRRKKRRRSQ (102 aa)) form a disordered region. N5-methylglutamine is present on Gln1046. Basic residues predominate over residues 1123 to 1132 (GRRKKRRRSQ).

It belongs to the NUT family. Post-translationally, methylated at Gln-1046 by N6AMT1. In terms of processing, phosphorylation on Ser-1026, Ser-1029 or Ser-1031 is important for cytoplasmic export. Specifically expressed in testis.

It localises to the cytoplasm. Its subcellular location is the nucleus. Its function is as follows. Plays a role in the regulation of proliferation. Regulates TERT expression by modulating SP1 binding to TERT promoter binding sites. The polypeptide is NUT family member 1 (Homo sapiens (Human)).